Reading from the N-terminus, the 564-residue chain is MKVSQFFLATVKETPADAVLASHQLMIRAGMLRKLASGLYTWLPLGLRVLQKVADVVREEMNRAGALELLMPIVQPASLWQESGRWEAYGAELLRIMDRHQNGFCFGPTHEEVITDIARQELKSYKQLPLNFYQIQTKFRDEIRPRFGVMRSREFLMKDAYSFDLDEKGMQAAYEKMFDAYRRIFTRLGLNFRAVLADTGAIGGDYSHEFQVLADVGEDTVVYSDESDYAANIEKAAAQAPQGERVKPVAEMKKIATPGVRTIKQLADKANILPEKGVKTLIVKGDESSLIALILRGDHELNDVKAQHLPGVAFPLQFADEKEIREAIGCGPGSLGPVNLPIPFIVDRDAAQLVDFSCGANEDDFHWINVNWERDVPLGSVADIRKVVEGDISPDGKGRLRFARGIEVGQVFQLGDKYSRKMNATVVDELGKSRYLQMGCYGIGVSRTVAAAIEQNHDERGIIWPMPMAPFFIALVPVNMHKSYRVREACEKLYNELIDAGYEVLWDDRKERPGVMFADMDLIGIPHRLVISESGLDRGIVEYKARKSKEAENVSLENVLSVFR.

It belongs to the class-II aminoacyl-tRNA synthetase family. ProS type 1 subfamily. Homodimer.

The protein localises to the cytoplasm. It catalyses the reaction tRNA(Pro) + L-proline + ATP = L-prolyl-tRNA(Pro) + AMP + diphosphate. In terms of biological role, catalyzes the attachment of proline to tRNA(Pro) in a two-step reaction: proline is first activated by ATP to form Pro-AMP and then transferred to the acceptor end of tRNA(Pro). As ProRS can inadvertently accommodate and process non-cognate amino acids such as alanine and cysteine, to avoid such errors it has two additional distinct editing activities against alanine. One activity is designated as 'pretransfer' editing and involves the tRNA(Pro)-independent hydrolysis of activated Ala-AMP. The other activity is designated 'posttransfer' editing and involves deacylation of mischarged Ala-tRNA(Pro). The misacylated Cys-tRNA(Pro) is not edited by ProRS. The chain is Proline--tRNA ligase from Coxiella burnetii (strain RSA 331 / Henzerling II).